A 371-amino-acid polypeptide reads, in one-letter code: ETS-related transcription factor Elf-3 (371 aa).

Residues 46–132 (NPQMSLEGTE…AQLRDLTSSS (87 aa)) form the PNT domain. The short motif at 137–145 (SWIIELLEK) is the 9aaTAD element. The segment at 173-251 (GQQASPYHPG…HGKRKRGRPR (79 aa)) is disordered. The span at 181–216 (PGSCGAGAPSPGSSDVSTAGTGASRSSHSSDSGGSD) shows a compositional bias: low complexity. The segment covering 231–241 (GFRDCKKGDPK) has biased composition (basic and acidic residues). Basic residues predominate over residues 242-251 (HGKRKRGRPR). Positions 273–355 (THLWEFIRDI…DGRRLVYKFG (83 aa)) form a DNA-binding region, ETS.

Belongs to the ETS family. As to quaternary structure, interacts with TBP. Interacts with CREBBP and EP300; these act as transcriptional coactivators of ELF3 and positively modulate its function. Interacts with XRCC5/KU86 and XRCC6/KU70; these inhibit the ability of ELF3 to bind DNA and negatively modulate its transcriptional activity. Associated with CLND7 and POU2F3. Interacts with ZNF768. In terms of tissue distribution, expressed exclusively in tissues containing a high content of terminally differentiated epithelial cells including mammary gland, colon, trachea, kidney, prostate, uterus, stomach and skin.

The protein resides in the cytoplasm. The protein localises to the nucleus. Functionally, transcriptional activator that binds and transactivates ETS sequences containing the consensus nucleotide core sequence GGA[AT]. Acts synergistically with POU2F3 to transactivate the SPRR2A promoter and with RUNX1 to transactivate the ANGPT1 promoter. Also transactivates collagenase, CCL20, CLND7, FLG, KRT8, NOS2, PTGS2, SPRR2B, TGFBR2 and TGM3 promoters. Represses KRT4 promoter activity. Involved in mediating vascular inflammation. May play an important role in epithelial cell differentiation and tumorigenesis. May be a critical downstream effector of the ERBB2 signaling pathway. May be associated with mammary gland development and involution. Plays an important role in the regulation of transcription with TATA-less promoters in preimplantation embryos, which is essential in preimplantation development. This is ETS-related transcription factor Elf-3 from Homo sapiens (Human).